The primary structure comprises 465 residues: Branched-chain amino acid permease BcaP (465 aa).

Helical transmembrane passes span 28 to 48 (FLALGVGTIISTSIFTLPGQV), 56 to 76 (GVVFSYLLAALVAGFVALAYA), 88 to 110 (AYSWISVLFGEGFGWIAGWALLA), 149 to 169 (DGGIVDIISLLVILLSAIIVF), 181 to 201 (ILVVLKVAAVIAFIIVGITVI), 219 to 239 (FGGFSGIWSGVSMIFLAYIGF), 259 to 279 (GIIGSLLIAVVLFAAVTLVLV), 309 to 329 (VVTAIALAGMFIALLGMVLAG), 359 to 379 (VWTLAIVAIVIGAFFPFAFLA), 380 to 400 (QLISAGTLIAFMFVTLGIYSL), 416 to 436 (PFYPVLPALGFIGSLFVFWGL), and 438 to 458 (VQAKLYSGIWFLIGIAIYFAY).

Belongs to the amino acid-polyamine-organocation (APC) superfamily.

It localises to the cell membrane. Its function is as follows. Branched-chain amino acid transport system that specifically transports branched-chain amino acids (BCAAs) (isoleucine, leucine and valine) and, to a lesser extent, methionine. Important for CodY-mediated regulation, and required for optimal growth in media containing free amino acids as the only amino acid source. This chain is Branched-chain amino acid permease BcaP, found in Lactococcus lactis subsp. cremoris (strain MG1363).